The primary structure comprises 547 residues: Chaperonin GroEL (547 aa).

Residues 30-33 (TLGP), K51, 87-91 (DGTTT), G415, 479-481 (NAA), and D495 contribute to the ATP site.

It belongs to the chaperonin (HSP60) family. As to quaternary structure, forms a cylinder of 14 subunits composed of two heptameric rings stacked back-to-back. Interacts with the co-chaperonin GroES.

Its subcellular location is the cytoplasm. The catalysed reaction is ATP + H2O + a folded polypeptide = ADP + phosphate + an unfolded polypeptide.. Its function is as follows. Together with its co-chaperonin GroES, plays an essential role in assisting protein folding. The GroEL-GroES system forms a nano-cage that allows encapsulation of the non-native substrate proteins and provides a physical environment optimized to promote and accelerate protein folding. In Enterobacter sp. (strain 638), this protein is Chaperonin GroEL.